The following is a 708-amino-acid chain: Leukotoxin translocation ATP-binding protein LktB (708 aa).

One can recognise a Peptidase C39 domain in the interval 1–126 (MEANHQRNDL…ACYQGQLILV (126 aa)). Residues 155–437 (FLETLIVSIF…LAQLWQDFQQ (283 aa)) enclose the ABC transmembrane type-1 domain. A run of 5 helical transmembrane segments spans residues 159–179 (LIVS…FQVV), 192–212 (LNII…LSGL), 270–290 (ALTS…MWYY), 296–316 (LVIL…SPIL), and 389–409 (VMVI…LSIG). In terms of domain architecture, ABC transporter spans 469–704 (ISFKNIRFRY…SNGLYSYLHQ (236 aa)). 503-510 (GRSGSGKS) is an ATP binding site.

The protein belongs to the ABC transporter superfamily. Protein-1 exporter (TC 3.A.1.109) family. As to quaternary structure, homodimer.

The protein resides in the cell inner membrane. The catalysed reaction is ATP + H2O + proteinSide 1 = ADP + phosphate + proteinSide 2.. Part of the ABC transporter complex LktBD involved in leukotoxin export. Transmembrane domains (TMD) form a pore in the inner membrane and the ATP-binding domain (NBD) is responsible for energy generation. This Mannheimia haemolytica (Pasteurella haemolytica) protein is Leukotoxin translocation ATP-binding protein LktB (lktB).